Here is a 97-residue protein sequence, read N- to C-terminus: Kininogen-1 (97 aa).

The N-terminal stretch at 1 to 23 (MRLWFCLSFLIILCVEHFPGTLA) is a signal peptide.

Belongs to the bradykinin-related peptide family. In terms of tissue distribution, expressed by the skin glands.

The protein resides in the secreted. In terms of biological role, [Ala3,Thr6]bradykinin: produces in vitro relaxation of rat arterial smooth muscle and constriction of intestinal smooth muscle. Possesses insulin-releasing activity. May target bradykinin receptors (BDKRB). The chain is Kininogen-1 from Bombina variegata (Yellow-bellied toad).